The primary structure comprises 187 residues: Elongation factor P (187 aa).

Belongs to the elongation factor P family.

It is found in the cytoplasm. Its pathway is protein biosynthesis; polypeptide chain elongation. Involved in peptide bond synthesis. Stimulates efficient translation and peptide-bond synthesis on native or reconstituted 70S ribosomes in vitro. Probably functions indirectly by altering the affinity of the ribosome for aminoacyl-tRNA, thus increasing their reactivity as acceptors for peptidyl transferase. This is Elongation factor P from Paenarthrobacter aurescens (strain TC1).